Consider the following 274-residue polypeptide: Trehalose transport system permease protein SugB (274 aa).

6 helical membrane passes run 8–28, 70–90, 102–122, 137–157, 182–202, and 239–259; these read YWAVLDTLVVGYALLPVLWIF, IGIGLITTVIAVVLGAMAAYA, LIGAALLITMFPSISLVTPLF, LILPYITFALPLAIYTLSAFF, VIVPLAAPGLVTAAILVFIFA, and GSIAAGAIVITIPIIVFVLIF. Residues 66–259 form the ABC transmembrane type-1 domain; that stretch reads LINSIGIGLI…IPIIVFVLIF (194 aa).

The protein belongs to the binding-protein-dependent transport system permease family. In terms of assembly, the complex is composed of two ATP-binding proteins (SugC), two transmembrane proteins (Suga and SugB) and a solute-binding protein (LpqY).

It localises to the cell inner membrane. In terms of biological role, part of the ABC transporter complex LpqY-SugA-SugB-SugC, which is highly specific for uptake of trehalose. Involved in the recycling of extracellular trehalose released from trehalose-containing molecules synthesized by M.tuberculosis. Trehalose uptake is essential for virulence. Probably responsible for the translocation of the substrate across the membrane. This chain is Trehalose transport system permease protein SugB (sugB), found in Mycobacterium tuberculosis (strain CDC 1551 / Oshkosh).